Here is a 404-residue protein sequence, read N- to C-terminus: Double-stranded RNA-binding protein 5 (404 aa).

2 consecutive DRBM domains span residues 1–70 (MYKN…RLSL) and 87–155 (VYKN…SLKQ). Disordered regions lie at residues 195–236 (RRRR…STEE), 263–320 (GGRT…RRNA), and 336–362 (RRRP…FSDP). Residues 263-280 (GGRTQDTASPAPAAAAAS) are compositionally biased toward low complexity. The span at 302-316 (AGAHAARRHAARQGG) shows a compositional bias: basic residues.

Functionally, binds double-stranded RNA. This chain is Double-stranded RNA-binding protein 5 (DRB5), found in Oryza sativa subsp. japonica (Rice).